The sequence spans 206 residues: HTH-type transcriptional regulator Hpr (206 aa).

One can recognise an HTH marR-type domain in the interval 13-157 (ALLFSQRMAQ…MMCIIRNIYG (145 aa)). A DNA-binding region (H-T-H motif) is located at residues 63–86 (ISEIAKFGVMHVSTAFNFSKKLEE). The tract at residues 186–206 (SEELEDSADAAEKAAKANQIV) is disordered.

Homodimer.

In terms of biological role, negative regulator of protease production and sporulation. In Bacillus pumilus (strain SAFR-032), this protein is HTH-type transcriptional regulator Hpr.